We begin with the raw amino-acid sequence, 388 residues long: Na(+)/H(+) antiporter NhaA (388 aa).

Helical transmembrane passes span 13–33 (AAGG…ANTP), 36–56 (GIYH…LEIA), 59–79 (LLLW…GLEV), 95–115 (VFPA…YLMF), 125–145 (GWAI…ALLG), 154–174 (VFLL…IALF), 179–199 (VSMA…FMNW), 213–233 (LVLW…GVII), 259–279 (VAFL…LQGV), 287–307 (LLPV…IFTF), 328–348 (VFAV…IASL), and 363–383 (LGIL…LRMS).

This sequence belongs to the NhaA Na(+)/H(+) (TC 2.A.33) antiporter family.

The protein localises to the cell inner membrane. It catalyses the reaction Na(+)(in) + 2 H(+)(out) = Na(+)(out) + 2 H(+)(in). Its function is as follows. Na(+)/H(+) antiporter that extrudes sodium in exchange for external protons. The protein is Na(+)/H(+) antiporter NhaA of Serratia proteamaculans (strain 568).